Here is a 508-residue protein sequence, read N- to C-terminus: Putative glycosyl hydrolase ecdF (508 aa).

Residues 1-15 (MFLHILCLLAGQALA) form the signal peptide. N-linked (GlcNAc...) asparagine glycans are attached at residues Asn99, Asn122, Asn275, and Asn362.

The protein belongs to the glycosyl hydrolase 32 family.

This Aspergillus rugulosus (Emericella rugulosa) protein is Putative glycosyl hydrolase ecdF.